The sequence spans 261 residues: 5'-nucleotidase SurE (261 aa).

4 residues coordinate a divalent metal cation: Asp8, Asp9, Ser43, and Asn96.

This sequence belongs to the SurE nucleotidase family. It depends on a divalent metal cation as a cofactor.

It localises to the cytoplasm. The catalysed reaction is a ribonucleoside 5'-phosphate + H2O = a ribonucleoside + phosphate. Nucleotidase that shows phosphatase activity on nucleoside 5'-monophosphates. This chain is 5'-nucleotidase SurE, found in Cereibacter sphaeroides (strain KD131 / KCTC 12085) (Rhodobacter sphaeroides).